A 1349-amino-acid chain; its full sequence is Indole-3-acetaldehyde oxidase (1349 aa).

Positions 7-94 constitute a 2Fe-2S ferredoxin-type domain; sequence AAVVLAVNGK…RCSVTTSEGI (88 aa). [2Fe-2S] cluster-binding residues include Cys46, Cys51, and Cys54. The 179-residue stretch at 237-415 folds into the FAD-binding PCMH-type domain; sequence VPVSDDGWYR…LSIFIPEWGS (179 aa).

It belongs to the xanthine dehydrogenase family. In terms of assembly, aldehyde oxidases (AO) are homodimers and heterodimers of AO subunits. Requires [2Fe-2S] cluster as cofactor. FAD serves as cofactor. Mo-molybdopterin is required as a cofactor. In terms of tissue distribution, mostly expressed in coleoptiles, and, to a lower extent, in mesocotyl and roots.

The protein localises to the cytoplasm. It carries out the reaction indole-3-acetaldehyde + O2 + H2O = (indol-3-yl)acetate + H2O2 + H(+). In higher plants aldehyde oxidases (AO) appear to be homo- and heterodimeric assemblies of AO subunits with probably different physiological functions. Involved in the biosynthesis of auxin. The polypeptide is Indole-3-acetaldehyde oxidase (AO2) (Zea mays (Maize)).